Reading from the N-terminus, the 265-residue chain is GTP cyclohydrolase FolE2 (265 aa).

Belongs to the GTP cyclohydrolase IV family.

It carries out the reaction GTP + H2O = 7,8-dihydroneopterin 3'-triphosphate + formate + H(+). It participates in cofactor biosynthesis; 7,8-dihydroneopterin triphosphate biosynthesis; 7,8-dihydroneopterin triphosphate from GTP: step 1/1. Functionally, converts GTP to 7,8-dihydroneopterin triphosphate. The chain is GTP cyclohydrolase FolE2 from Bordetella bronchiseptica (strain ATCC BAA-588 / NCTC 13252 / RB50) (Alcaligenes bronchisepticus).